Reading from the N-terminus, the 551-residue chain is RCC1 and BTB domain-containing protein 2 (551 aa).

6 RCC1 repeats span residues 64–115 (NDEI…VLAT), 117–169 (EGEV…VLTS), 171–222 (GEVF…AVVD), 223–274 (TGEV…VLTD), 276–326 (GQVY…AAKT), and 328–382 (GGHV…TVAE). The BTB domain occupies 394–457 (ADLKFLVDGK…LYTDSISLSP (64 aa)).

It localises to the cytoplasmic vesicle. It is found in the secretory vesicle. Its subcellular location is the acrosome. In Homo sapiens (Human), this protein is RCC1 and BTB domain-containing protein 2 (RCBTB2).